Consider the following 60-residue polypeptide: Large ribosomal subunit protein uL30 (60 aa).

It belongs to the universal ribosomal protein uL30 family. Part of the 50S ribosomal subunit.

This is Large ribosomal subunit protein uL30 from Shewanella sp. (strain ANA-3).